We begin with the raw amino-acid sequence, 412 residues long: Light-independent protochlorophyllide reductase subunit N (412 aa).

Residues Cys-16, Cys-41, and Cys-102 each contribute to the [4Fe-4S] cluster site.

The protein belongs to the BchN/ChlN family. In terms of assembly, protochlorophyllide reductase is composed of three subunits; ChlL, ChlN and ChlB. Forms a heterotetramer of two ChlB and two ChlN subunits. Requires [4Fe-4S] cluster as cofactor.

The catalysed reaction is chlorophyllide a + oxidized 2[4Fe-4S]-[ferredoxin] + 2 ADP + 2 phosphate = protochlorophyllide a + reduced 2[4Fe-4S]-[ferredoxin] + 2 ATP + 2 H2O. It participates in porphyrin-containing compound metabolism; chlorophyll biosynthesis (light-independent). Its function is as follows. Component of the dark-operative protochlorophyllide reductase (DPOR) that uses Mg-ATP and reduced ferredoxin to reduce ring D of protochlorophyllide (Pchlide) to form chlorophyllide a (Chlide). This reaction is light-independent. The NB-protein (ChlN-ChlB) is the catalytic component of the complex. This is Light-independent protochlorophyllide reductase subunit N from Synechococcus sp. (strain RCC307).